A 252-amino-acid chain; its full sequence is Tabinhibitin 9 (252 aa).

An N-terminal signal peptide occupies residues methionine 1–serine 23. The Cell attachment site signature appears at arginine 32–aspartate 34. The SCP domain maps to tyrosine 63–phenylalanine 207.

This sequence belongs to the CRISP family. Expressed in salivary glands.

The protein localises to the secreted. Inhibits platelet aggregation induced by all agonists tested (ADP, arachidonic acid, the thromboxane A2 analog U46619, thrombin, and snake venom snaclecs (TMVA that activates platelet through GPIB, and stejnulxin that specifically acts through GPVI (GP6))). May act by competing with fibrinogen for binding to glycoprotein IIb/IIIa (ITGA2B/ITGB3). This chain is Tabinhibitin 9, found in Tabanus yao (Horsefly).